The following is a 202-amino-acid chain: Small ribosomal subunit protein uS4 (202 aa).

The S4 RNA-binding domain maps to 94 to 157; the sequence is SRLDSLVYRA…LEMPLIKNTL (64 aa).

It belongs to the universal ribosomal protein uS4 family. In terms of assembly, part of the 30S ribosomal subunit. Contacts protein S5. The interaction surface between S4 and S5 is involved in control of translational fidelity.

In terms of biological role, one of the primary rRNA binding proteins, it binds directly to 16S rRNA where it nucleates assembly of the body of the 30S subunit. With S5 and S12 plays an important role in translational accuracy. In Ureaplasma urealyticum serovar 10 (strain ATCC 33699 / Western), this protein is Small ribosomal subunit protein uS4.